A 192-amino-acid polypeptide reads, in one-letter code: Per os infectivity factor 6 (192 aa).

The chain crosses the membrane as a helical span at residues 154–174 (IAYVFLFFICIVLLSVLAVFF).

Its subcellular location is the host membrane. The protein localises to the virion. It is found in the host cytoplasm. The protein resides in the host nucleus. Functionally, per os infectivity factor. In Autographa californica nuclear polyhedrosis virus (AcMNPV), this protein is Per os infectivity factor 6 (AC68).